The chain runs to 434 residues: Eukaryotic translation initiation factor 3 subunit E-1 (434 aa).

One can recognise a PCI domain in the interval 219 to 392; that stretch reads FFNHPKGRDL…GHVVMGTQPL (174 aa).

It belongs to the eIF-3 subunit E family. In terms of assembly, component of the eukaryotic translation initiation factor 3 (eIF-3) complex. The eIF-3 complex interacts with pix. Interacts with mxt.

It localises to the cytoplasm. Its function is as follows. Component of the eukaryotic translation initiation factor 3 (eIF-3) complex, which is involved in protein synthesis of a specialized repertoire of mRNAs and, together with other initiation factors, stimulates binding of mRNA and methionyl-tRNAi to the 40S ribosome. The eIF-3 complex specifically targets and initiates translation of a subset of mRNAs involved in cell proliferation. In Drosophila willistoni (Fruit fly), this protein is Eukaryotic translation initiation factor 3 subunit E-1 (eIF3-S6-1).